A 365-amino-acid chain; its full sequence is Peptide chain release factor 2 (365 aa).

Residue Gln-251 is modified to N5-methylglutamine.

Belongs to the prokaryotic/mitochondrial release factor family. Methylated by PrmC. Methylation increases the termination efficiency of RF2.

The protein localises to the cytoplasm. Its function is as follows. Peptide chain release factor 2 directs the termination of translation in response to the peptide chain termination codons UGA and UAA. In Neorickettsia sennetsu (strain ATCC VR-367 / Miyayama) (Ehrlichia sennetsu), this protein is Peptide chain release factor 2.